Here is a 94-residue protein sequence, read N- to C-terminus: Trp operon repressor homolog (94 aa).

A DNA-binding region spans residues 58–81 (QREIAEKYGVSIAQITRGSNALKG).

This sequence belongs to the TrpR family. As to quaternary structure, homodimer.

Its subcellular location is the cytoplasm. Functionally, this protein is an aporepressor. When complexed with L-tryptophan it binds the operator region of the trp operon and prevents the initiation of transcription. The protein is Trp operon repressor homolog of Chlamydia trachomatis serovar L2 (strain ATCC VR-902B / DSM 19102 / 434/Bu).